Consider the following 105-residue polypeptide: Heat shock protein HspQ (105 aa).

Residues 74 to 105 (SSETQDEHPEQPSMDELARTIRKQLQAPRLRN) are disordered.

It belongs to the HspQ family.

Its subcellular location is the cytoplasm. In terms of biological role, involved in the degradation of certain denaturated proteins, including DnaA, during heat shock stress. This chain is Heat shock protein HspQ, found in Citrobacter koseri (strain ATCC BAA-895 / CDC 4225-83 / SGSC4696).